The following is a 213-amino-acid chain: Transcriptional regulatory protein CrdR (213 aa).

The Response regulatory domain maps to 4 to 119; it reads KIFLLEDDYL…ELEARIKRFF (116 aa). 4-aspartylphosphate is present on Asp53. The ompR/PhoB-type DNA-binding region spans 121 to 212; sequence DDPIEIMPNI…HKGVGYRFNP (92 aa).

Post-translationally, phosphorylated by CrdS.

Member of the two-component regulatory system CrdR/CrdS that induces the transcriptional induction of the copper resistance determinant CrdA. Upon phosphorylation by CrdS, functions as a transcriptional regulator by direct binding to promoter regions of target genes including the crdA promoter or nitric oxide-responsive gene promoters. This Helicobacter pylori (strain ATCC 700392 / 26695) (Campylobacter pylori) protein is Transcriptional regulatory protein CrdR.